A 45-amino-acid polypeptide reads, in one-letter code: Caltrin-like protein 1 (45 aa).

Positions 8–45 (DSDRPNCSRYVQHLYMCTKELDPVCGTDGHTYGNRSIF) constitute a Kazal-like domain. 2 N-linked (GlcNAc...) asparagine glycosylation sites follow: Asn-13 and Asn-41.

In terms of processing, glycosylated.

Its subcellular location is the secreted. Functionally, inhibits calcium transport into spermatozoa. The chain is Caltrin-like protein 1 from Cavia porcellus (Guinea pig).